Reading from the N-terminus, the 270-residue chain is Phosphonoacetaldehyde hydrolase (270 aa).

The active-site Nucleophile is Asp11. Mg(2+) is bound by residues Asp11 and Ala13. Lys53 functions as the Schiff-base intermediate with substrate in the catalytic mechanism. Asp187 provides a ligand contact to Mg(2+).

It belongs to the HAD-like hydrolase superfamily. PhnX family. Homodimer. Requires Mg(2+) as cofactor.

It carries out the reaction phosphonoacetaldehyde + H2O = acetaldehyde + phosphate + H(+). Its function is as follows. Involved in phosphonate degradation. This chain is Phosphonoacetaldehyde hydrolase, found in Salmonella enteritidis PT4 (strain P125109).